A 341-amino-acid polypeptide reads, in one-letter code: DnaJ homolog subfamily C member 22 (341 aa).

The 47-residue stretch at Gly-4–Trp-50 folds into the TM2 domain. 7 consecutive transmembrane segments (helical) span residues Leu-5–Leu-25, His-30–Trp-50, Phe-81–Ser-101, Phe-105–Gly-125, Leu-135–Ile-155, Val-185–Ala-205, and Val-232–Phe-252. One can recognise a J domain in the interval Leu-277 to Arg-341.

Its subcellular location is the membrane. Functionally, may function as a co-chaperone. The protein is DnaJ homolog subfamily C member 22 (Dnajc22) of Rattus norvegicus (Rat).